The sequence spans 125 residues: Large ribosomal subunit protein uL22 (125 aa).

The protein belongs to the universal ribosomal protein uL22 family. Part of the 50S ribosomal subunit.

In terms of biological role, this protein binds specifically to 23S rRNA; its binding is stimulated by other ribosomal proteins, e.g. L4, L17, and L20. It is important during the early stages of 50S assembly. It makes multiple contacts with different domains of the 23S rRNA in the assembled 50S subunit and ribosome. Its function is as follows. The globular domain of the protein is located near the polypeptide exit tunnel on the outside of the subunit, while an extended beta-hairpin is found that lines the wall of the exit tunnel in the center of the 70S ribosome. The protein is Large ribosomal subunit protein uL22 of Novosphingobium aromaticivorans (strain ATCC 700278 / DSM 12444 / CCUG 56034 / CIP 105152 / NBRC 16084 / F199).